Consider the following 291-residue polypeptide: tRNA pseudouridine synthase B (291 aa).

The Nucleophile role is filled by Asp41.

It belongs to the pseudouridine synthase TruB family. Type 1 subfamily.

It catalyses the reaction uridine(55) in tRNA = pseudouridine(55) in tRNA. In terms of biological role, responsible for synthesis of pseudouridine from uracil-55 in the psi GC loop of transfer RNAs. The protein is tRNA pseudouridine synthase B of Parasynechococcus marenigrum (strain WH8102).